A 143-amino-acid chain; its full sequence is Peptide methionine sulfoxide reductase MsrB (143 aa).

Positions 16–139 (DAELRRRLTP…NSAALNFESR (124 aa)) constitute a MsrB domain. Zn(2+)-binding residues include Cys-55, Cys-58, Cys-104, and Cys-107. Cys-128 functions as the Nucleophile in the catalytic mechanism.

Belongs to the MsrB Met sulfoxide reductase family. Zn(2+) is required as a cofactor.

It carries out the reaction L-methionyl-[protein] + [thioredoxin]-disulfide + H2O = L-methionyl-(R)-S-oxide-[protein] + [thioredoxin]-dithiol. The chain is Peptide methionine sulfoxide reductase MsrB from Burkholderia orbicola (strain MC0-3).